The sequence spans 198 residues: Penicillin-binding protein activator LpoB (198 aa).

Positions 1–19 are cleaved as a signal peptide; sequence MIRSVNRTGALMMALILSG. Residue Cys-20 is the site of N-palmitoyl cysteine attachment. Cys-20 is lipidated: S-diacylglycerol cysteine. The span at 26 to 37 shows a compositional bias: low complexity; that stretch reads QPAPVEPTQPVE. A disordered region spans residues 26–59; the sequence is QPAPVEPTQPVEPVQPVPQPEQPIPQPQPVPQPP. Pro residues predominate over residues 38-59; that stretch reads PVQPVPQPEQPIPQPQPVPQPP.

Belongs to the LpoB family. In terms of assembly, interacts with PBP1b.

The protein localises to the cell outer membrane. Its function is as follows. Regulator of peptidoglycan synthesis that is essential for the function of penicillin-binding protein 1B (PBP1b). This Pantoea ananatis (strain LMG 20103) protein is Penicillin-binding protein activator LpoB.